A 351-amino-acid chain; its full sequence is Tropomodulin-2 (351 aa).

A Phosphoserine modification is found at serine 25.

The protein belongs to the tropomodulin family. In terms of assembly, binds to the N-terminus of tropomyosin and to actin. Binds to TMBr3 as well as to other low molecular mass tropomyosins (TM5a or TM5), but not to high molecular mass tropomyosins (TM2 or TMBr1). In terms of tissue distribution, neuronal-tissue specific.

Its subcellular location is the cytoplasm. It is found in the cytoskeleton. Its function is as follows. Blocks the elongation and depolymerization of the actin filaments at the pointed end. The Tmod/TM complex contributes to the formation of the short actin protofilament, which in turn defines the geometry of the membrane skeleton. The polypeptide is Tropomodulin-2 (Tmod2) (Rattus norvegicus (Rat)).